A 118-amino-acid chain; its full sequence is Large ribosomal subunit protein uL18 (118 aa).

The tract at residues 1–20 (MISKPDKNKKRQRRHARVRS) is disordered. Over residues 7–20 (KNKKRQRRHARVRS) the composition is skewed to basic residues.

The protein belongs to the universal ribosomal protein uL18 family. As to quaternary structure, part of the 50S ribosomal subunit; part of the 5S rRNA/L5/L18/L25 subcomplex. Contacts the 5S and 23S rRNAs.

Its function is as follows. This is one of the proteins that bind and probably mediate the attachment of the 5S RNA into the large ribosomal subunit, where it forms part of the central protuberance. The chain is Large ribosomal subunit protein uL18 from Pediococcus pentosaceus (strain ATCC 25745 / CCUG 21536 / LMG 10740 / 183-1w).